We begin with the raw amino-acid sequence, 223 residues long: Ribonuclease 3 (223 aa).

An RNase III domain is found at 1–131 (MDGVDELLLR…LIGAVMVDQG (131 aa)). Glutamate 44 contributes to the Mg(2+) binding site. Aspartate 48 is an active-site residue. The Mg(2+) site is built by aspartate 117 and glutamate 120. Residue glutamate 120 is part of the active site. Positions 157 to 220 (DPKTKLQKLT…AMSALASLEN (64 aa)) constitute a DRBM domain.

Belongs to the ribonuclease III family. In terms of assembly, homodimer. Mg(2+) serves as cofactor.

It localises to the cytoplasm. The enzyme catalyses Endonucleolytic cleavage to 5'-phosphomonoester.. Functionally, digests double-stranded RNA. Involved in the processing of primary rRNA transcript to yield the immediate precursors to the large and small rRNAs (23S and 16S). Processes some mRNAs, and tRNAs when they are encoded in the rRNA operon. Processes pre-crRNA and tracrRNA of type II CRISPR loci if present in the organism. The sequence is that of Ribonuclease 3 from Tropheryma whipplei (strain Twist) (Whipple's bacillus).